Here is a 326-residue protein sequence, read N- to C-terminus: Probable cell division protein WhiA (326 aa).

The H-T-H motif DNA-binding region spans 275-308 (SLDELGHHADPPMTKDAVAGRIRRLLAMADKKAV).

The protein belongs to the WhiA family.

Involved in cell division and chromosome segregation. The sequence is that of Probable cell division protein WhiA from Clavibacter sepedonicus (Clavibacter michiganensis subsp. sepedonicus).